Consider the following 165-residue polypeptide: Ribosome maturation factor RimM (165 aa).

Residues 90–161 (EDEYFIVDLV…LITIRPSGEW (72 aa)) form the PRC barrel domain.

This sequence belongs to the RimM family. In terms of assembly, binds ribosomal protein uS19.

It localises to the cytoplasm. Functionally, an accessory protein needed during the final step in the assembly of 30S ribosomal subunit, possibly for assembly of the head region. Essential for efficient processing of 16S rRNA. May be needed both before and after RbfA during the maturation of 16S rRNA. It has affinity for free ribosomal 30S subunits but not for 70S ribosomes. The polypeptide is Ribosome maturation factor RimM (Clostridium perfringens (strain SM101 / Type A)).